The following is a 181-amino-acid chain: Nucleoside diphosphate kinase, mitochondrial (181 aa).

Residues 1–10 (MFRGGTHRLR) are compositionally biased toward basic residues. Residues 1–22 (MFRGGTHRLRGQPGLSLPHGPR) form a disordered region. A mitochondrion-targeting transit peptide spans 1 to 24 (MFRGGTHRLRGQPGLSLPHGPRCY). 6 residues coordinate ATP: Lys-40, Phe-88, Arg-116, Thr-122, Arg-133, and Asn-143. Residue His-146 is the Pros-phosphohistidine intermediate of the active site.

The protein belongs to the NDK family. Requires Mg(2+) as cofactor. In terms of tissue distribution, highest levels in the liver and kidney with lower levels in the heart, brain and breast muscle.

The protein localises to the mitochondrion intermembrane space. Its subcellular location is the mitochondrion matrix. It catalyses the reaction a 2'-deoxyribonucleoside 5'-diphosphate + ATP = a 2'-deoxyribonucleoside 5'-triphosphate + ADP. The catalysed reaction is a ribonucleoside 5'-diphosphate + ATP = a ribonucleoside 5'-triphosphate + ADP. Its activity is regulated as follows. Feedback inhibition by ADP. Major role in the synthesis of nucleoside triphosphates other than ATP. The ATP gamma phosphate is transferred to the NDP beta phosphate via a ping-pong mechanism, using a phosphorylated active-site intermediate. Through the catalyzed exchange of gamma-phosphate between di- and triphosphonucleosides participates in regulation of intracellular nucleotide homeostasis. Binds to anionic phospholipids, predominantly to cardiolipin; the binding inhibits its phosphotransfer activity. Acts as a mitochondria-specific NDK coupled to respiration. Promotes the redistribution of cardiolipin between the mitochondrial inner membrane and outer membrane which is implicated in pro-apoptotic signaling. The sequence is that of Nucleoside diphosphate kinase, mitochondrial (NME4) from Columba livia (Rock dove).